A 337-amino-acid polypeptide reads, in one-letter code: Ornithine carbamoyltransferase, catabolic (337 aa).

Residues 58–61 (STRT), Gln-85, Arg-109, and 135–138 (HPTQ) contribute to the carbamoyl phosphate site. Residues Asn-167, Asp-231, and 235-236 (SM) contribute to the L-ornithine site. Carbamoyl phosphate contacts are provided by residues 272–273 (CL) and Arg-317.

Belongs to the aspartate/ornithine carbamoyltransferase superfamily. OTCase family.

It is found in the cytoplasm. The catalysed reaction is carbamoyl phosphate + L-ornithine = L-citrulline + phosphate + H(+). Its pathway is amino-acid degradation; L-arginine degradation via ADI pathway; carbamoyl phosphate from L-arginine: step 2/2. In terms of biological role, reversibly catalyzes the transfer of the carbamoyl group from carbamoyl phosphate (CP) to the N(epsilon) atom of ornithine (ORN) to produce L-citrulline. This Latilactobacillus sakei (Lactobacillus sakei) protein is Ornithine carbamoyltransferase, catabolic (arcB).